The chain runs to 223 residues: Large ribosomal subunit protein bL21 (223 aa).

It belongs to the bacterial ribosomal protein bL21 family. In terms of assembly, part of the 50S ribosomal subunit. Contacts protein L20.

In terms of biological role, this protein binds to 23S rRNA in the presence of protein L20. The chain is Large ribosomal subunit protein bL21 from Mesorhizobium japonicum (strain LMG 29417 / CECT 9101 / MAFF 303099) (Mesorhizobium loti (strain MAFF 303099)).